We begin with the raw amino-acid sequence, 285 residues long: Inositol monophosphatase 1 (285 aa).

The Mg(2+) site is built by Glu-73, Asp-93, Ile-95, and Asp-96. Glu-73 is a binding site for substrate. Residues 95–98 (IDGT), 198–200 (GTA), Glu-217, and Asp-224 contribute to the substrate site. Residue Asp-224 coordinates Mg(2+).

This sequence belongs to the inositol monophosphatase superfamily. In terms of assembly, homodimer. It depends on Mg(2+) as a cofactor.

The protein resides in the cytoplasm. It catalyses the reaction a myo-inositol phosphate + H2O = myo-inositol + phosphate. The catalysed reaction is 1D-myo-inositol 1-phosphate + H2O = myo-inositol + phosphate. The enzyme catalyses 1D-myo-inositol 2-phosphate + H2O = myo-inositol + phosphate. It carries out the reaction 1D-myo-inositol 3-phosphate + H2O = myo-inositol + phosphate. It catalyses the reaction 1D-myo-inositol 4-phosphate + H2O = myo-inositol + phosphate. The catalysed reaction is 1D-myo-inositol 5-phosphate + H2O = myo-inositol + phosphate. The enzyme catalyses 1D-myo-inositol 6-phosphate + H2O = myo-inositol + phosphate. It carries out the reaction scyllo-inositol 1-phosphate + H2O = scyllo-inositol + phosphate. It catalyses the reaction alpha-D-galactose 1-phosphate + H2O = D-galactose + phosphate. The catalysed reaction is alpha-D-glucose 1-phosphate + H2O = D-glucose + phosphate. The enzyme catalyses D-glucose 6-phosphate + H2O = D-glucose + phosphate. It carries out the reaction beta-D-fructose 1-phosphate + H2O = D-fructose + phosphate. It catalyses the reaction glycerol 2-phosphate + H2O = glycerol + phosphate. The catalysed reaction is adenosine 2'-phosphate + H2O = adenosine + phosphate. It functions in the pathway polyol metabolism; myo-inositol biosynthesis; myo-inositol from D-glucose 6-phosphate: step 2/2. Inhibited by Li(+), Ca(2+) and Mn(2+), but also by Mg(2+) at concentrations above 3 mM. Its function is as follows. Phosphatase involved in the dephosphorylation of myo-inositol monophosphate to generate myo-inositol. Is also able to dephosphorylate scyllo-inositol-phosphate, myo-inositol 1,4-diphosphate, scyllo-inositol-1,3-diphosphate and scyllo-inositol-1,4-diphosphate. Also dephosphorylates in vitro other sugar-phosphates including D-galactose-1-phosphate, glucose-1-phosphate, glucose-6-phosphate, fructose-1-phosphate, beta-glycerophosphate and 2'-AMP. Responsible for the provision of inositol required for synthesis of phosphatidylinositol and polyphosphoinositides, and involved in maintaining normal brain function. Has been implicated as the pharmacological target for lithium Li(+) action in brain. The polypeptide is Inositol monophosphatase 1 (impa1) (Xenopus laevis (African clawed frog)).